The chain runs to 294 residues: Bifunctional protein FolD (294 aa).

Residues Gly166–Ser168, Ser191, and Ile232 each bind NADP(+).

Belongs to the tetrahydrofolate dehydrogenase/cyclohydrolase family. As to quaternary structure, homodimer.

It catalyses the reaction (6R)-5,10-methylene-5,6,7,8-tetrahydrofolate + NADP(+) = (6R)-5,10-methenyltetrahydrofolate + NADPH. It carries out the reaction (6R)-5,10-methenyltetrahydrofolate + H2O = (6R)-10-formyltetrahydrofolate + H(+). The protein operates within one-carbon metabolism; tetrahydrofolate interconversion. Its function is as follows. Catalyzes the oxidation of 5,10-methylenetetrahydrofolate to 5,10-methenyltetrahydrofolate and then the hydrolysis of 5,10-methenyltetrahydrofolate to 10-formyltetrahydrofolate. The protein is Bifunctional protein FolD of Bradyrhizobium sp. (strain ORS 278).